The sequence spans 337 residues: Inner membrane protein YhjD (337 aa).

The segment covering M1–S29 has biased composition (basic and acidic residues). The disordered stretch occupies residues M1–V31. Over M1–T74 the chain is Cytoplasmic. Residues Y75 to A97 form a helical membrane-spanning segment. Residues S98 to Q133 are Periplasmic-facing. The helical transmembrane segment at R134–L156 threads the bilayer. At R157–D185 the chain is on the cytoplasmic side. Residues F186 to S208 traverse the membrane as a helical segment. Topologically, residues A209–P227 are periplasmic. Residues T228 to W250 traverse the membrane as a helical segment. Residues R251–A261 are Cytoplasmic-facing. Residues L262–L284 traverse the membrane as a helical segment. Topologically, residues P285–S298 are periplasmic. Residues V299 to A321 traverse the membrane as a helical segment. At T322–P337 the chain is on the cytoplasmic side.

The protein localises to the cell inner membrane. The sequence is that of Inner membrane protein YhjD (yhjD) from Escherichia coli (strain K12).